Here is a 121-residue protein sequence, read N- to C-terminus: Large ribosomal subunit protein bL12 (121 aa).

The protein belongs to the bacterial ribosomal protein bL12 family. In terms of assembly, homodimer. Part of the ribosomal stalk of the 50S ribosomal subunit. Forms a multimeric L10(L12)X complex, where L10 forms an elongated spine to which 2 to 4 L12 dimers bind in a sequential fashion. Binds GTP-bound translation factors.

In terms of biological role, forms part of the ribosomal stalk which helps the ribosome interact with GTP-bound translation factors. Is thus essential for accurate translation. The sequence is that of Large ribosomal subunit protein bL12 from Pediococcus pentosaceus (strain ATCC 25745 / CCUG 21536 / LMG 10740 / 183-1w).